We begin with the raw amino-acid sequence, 311 residues long: Malate dehydrogenase (311 aa).

NAD(+) is bound by residues 7-13 and D34; that span reads GAAGGIG. Substrate contacts are provided by R81 and R87. Residues N94 and 117-119 contribute to the NAD(+) site; that span reads ITN. Residues N119 and R153 each contribute to the substrate site. The active-site Proton acceptor is H177. NAD(+) is bound at residue M227.

The protein belongs to the LDH/MDH superfamily. MDH type 1 family. As to quaternary structure, homodimer.

The enzyme catalyses (S)-malate + NAD(+) = oxaloacetate + NADH + H(+). In terms of biological role, catalyzes the reversible oxidation of malate to oxaloacetate. This chain is Malate dehydrogenase, found in Aliivibrio salmonicida (strain LFI1238) (Vibrio salmonicida (strain LFI1238)).